A 285-amino-acid chain; its full sequence is Ribose-phosphate pyrophosphokinase (285 aa).

ATP contacts are provided by residues D34–E36 and R91–Q92. Positions 124 and 162 each coordinate Mg(2+). K185 is an active-site residue. D-ribose 5-phosphate is bound by residues R187, D211, and S215 to T219.

Belongs to the ribose-phosphate pyrophosphokinase family. Class III (archaeal) subfamily. Requires Mg(2+) as cofactor.

Its subcellular location is the cytoplasm. It carries out the reaction D-ribose 5-phosphate + ATP = 5-phospho-alpha-D-ribose 1-diphosphate + AMP + H(+). Its pathway is metabolic intermediate biosynthesis; 5-phospho-alpha-D-ribose 1-diphosphate biosynthesis; 5-phospho-alpha-D-ribose 1-diphosphate from D-ribose 5-phosphate (route I): step 1/1. Functionally, involved in the biosynthesis of the central metabolite phospho-alpha-D-ribosyl-1-pyrophosphate (PRPP) via the transfer of pyrophosphoryl group from ATP to 1-hydroxyl of ribose-5-phosphate (Rib-5-P). This chain is Ribose-phosphate pyrophosphokinase, found in Pyrococcus abyssi (strain GE5 / Orsay).